The following is a 402-amino-acid chain: MSLCTLEINLSAIKNNYRLLQDICTTALVGAAVKANGYGIGAMQIAKALIEENCQYFFVATSEEGINLRKALNNDITILVLNGVFTHDALELIQYNLTPVLNNLKQIEIWQKFSNLKEKILPCYLHFNTGLNRFGLNYDEIEQLINDRDLLKGLDLQYIISHLAASEEMDNPYNLAQLNRFKDYLEYFPNVKASLANSGGIFLGQDYHFDLARPGAALYGLNSLIEVSYNLSYKEKFERNTPALATTVCINKCADVNTRLTYKVPLKGSYRLQNPVTLKAPIIHLQNLTLDSHIGYNMTFTTKRDSIIATLPLGYADGFSRNFSNQGEVFINSRSVPIVGRVSMDLINIDVTDLPPSEVFLGQEVEIIGNYCTPDKIASIIGTVGYEVLTSLGSRYKRKYIS.

K34 (proton acceptor; specific for D-alanine) is an active-site residue. K34 carries the post-translational modification N6-(pyridoxal phosphate)lysine. Substrate is bound at residue R133. One can recognise an RPE1 insert domain in the interval 226–271; the sequence is EVSYNLSYKEKFERNTPALATTVCINKCADVNTRLTYKVPLKGSYR. Residue Y296 is the Proton acceptor; specific for L-alanine of the active site. Residue M344 coordinates substrate.

This sequence belongs to the alanine racemase family. Requires pyridoxal 5'-phosphate as cofactor.

It carries out the reaction L-alanine = D-alanine. It functions in the pathway amino-acid biosynthesis; D-alanine biosynthesis; D-alanine from L-alanine: step 1/1. Catalyzes the interconversion of L-alanine and D-alanine. May also act on other amino acids. The protein is Alanine racemase (alr) of Rickettsia typhi (strain ATCC VR-144 / Wilmington).